We begin with the raw amino-acid sequence, 527 residues long: Putative ABC transporter peptide-binding protein BOV_A0352 (527 aa).

Positions 1 to 23 are cleaved as a signal peptide; it reads MRLRNFYSALALSAAVFAGPLYA.

The protein belongs to the bacterial solute-binding protein 5 family. The complex is composed of two ATP-binding proteins (BOV_A0347 and BOV_A0348), two transmembrane proteins (BOV_A0350 and BOV_A0351) and a solute-binding protein (BOV_A0352).

It is found in the periplasm. In terms of biological role, probably part of an ABC transporter complex that could be involved in peptide import. In Brucella ovis (strain ATCC 25840 / 63/290 / NCTC 10512), this protein is Putative ABC transporter peptide-binding protein BOV_A0352.